A 41-amino-acid polypeptide reads, in one-letter code: Large ribosomal subunit protein bL36 (41 aa).

Belongs to the bacterial ribosomal protein bL36 family.

This Hyphomonas neptunium (strain ATCC 15444) protein is Large ribosomal subunit protein bL36.